Reading from the N-terminus, the 312-residue chain is MGDDNDTDITEFILLGFSGYGFLQGHLFWGVLCIYVVTLLGNSLIVLLTLADSALHSPMYFFLRHFSVVEILYTTTIVPRMLADLRSSCPTIPLASCFTQLYFFALFGIAECCLLTAMAYDRYAAICCPLHYTTLMSQGTYTGLVGASYLAGVISGTTHSIFIFTLPFRGAKTIHHFLCDILPVLRLATASTFWGEVGNLFVTITFIFVPFLLIVASYACILVTILGVATSQGRQKLFSTCSSHLFVVILFFGTATVAYMRPQADSFGNTDQILTLVYTVVTPMCNPFVYSLRNKEVTGAMRRLMKRYLWGP.

Residues 1–26 (MGDDNDTDITEFILLGFSGYGFLQGH) are Extracellular-facing. Residue Asn-5 is glycosylated (N-linked (GlcNAc...) asparagine). The helical transmembrane segment at 27–47 (LFWGVLCIYVVTLLGNSLIVL) threads the bilayer. Over 48-57 (LTLADSALHS) the chain is Cytoplasmic. A helical membrane pass occupies residues 58–78 (PMYFFLRHFSVVEILYTTTIV). Residues 79–89 (PRMLADLRSSC) lie on the Extracellular side of the membrane. A helical membrane pass occupies residues 90–110 (PTIPLASCFTQLYFFALFGIA). At 111–143 (ECCLLTAMAYDRYAAICCPLHYTTLMSQGTYTG) the chain is on the cytoplasmic side. The chain crosses the membrane as a helical span at residues 144–164 (LVGASYLAGVISGTTHSIFIF). The Extracellular segment spans residues 165–205 (TLPFRGAKTIHHFLCDILPVLRLATASTFWGEVGNLFVTIT). The helical transmembrane segment at 206-226 (FIFVPFLLIVASYACILVTIL) threads the bilayer. Residues 227–236 (GVATSQGRQK) are Cytoplasmic-facing. A helical transmembrane segment spans residues 237–257 (LFSTCSSHLFVVILFFGTATV). Residues 258-271 (AYMRPQADSFGNTD) lie on the Extracellular side of the membrane. The helical transmembrane segment at 272–292 (QILTLVYTVVTPMCNPFVYSL) threads the bilayer. Over 293-312 (RNKEVTGAMRRLMKRYLWGP) the chain is Cytoplasmic.

It belongs to the G-protein coupled receptor 1 family.

Its subcellular location is the cell membrane. In terms of biological role, odorant receptor. The chain is Olfactory receptor 10P22 from Mus musculus (Mouse).